The chain runs to 580 residues: uncharacterized protein (580 aa).

5 disordered regions span residues 161–241 (SFSP…SVND), 256–281 (LGSL…SFSD), 325–345 (NVSH…QLLK), 472–495 (PRDT…DNSD), and 544–564 (SAVL…KEVR). The span at 192-203 (SNSNSSDTSTDD) shows a compositional bias: low complexity. 2 stretches are compositionally biased toward polar residues: residues 223-241 (THSS…SVND) and 256-269 (LGSL…TAQK). Basic and acidic residues predominate over residues 326-341 (VSHEEKSHSVQDDKSK). The span at 481–495 (PNLSQSGNINSDNSD) shows a compositional bias: polar residues.

This is an uncharacterized protein from Schizosaccharomyces pombe (strain 972 / ATCC 24843) (Fission yeast).